We begin with the raw amino-acid sequence, 287 residues long: Small ribosomal subunit biogenesis GTPase RsgA (287 aa).

One can recognise a CP-type G domain in the interval 61 to 218 (SSELIRPTVA…LVDTPGFTTL (158 aa)). GTP-binding positions include 110-113 (NKED) and 161-169 (GPSGAGKST). Residues Cys242, Cys247, His249, and Cys255 each coordinate Zn(2+).

The protein belongs to the TRAFAC class YlqF/YawG GTPase family. RsgA subfamily. As to quaternary structure, monomer. Associates with 30S ribosomal subunit, binds 16S rRNA. The cofactor is Zn(2+).

The protein localises to the cytoplasm. One of several proteins that assist in the late maturation steps of the functional core of the 30S ribosomal subunit. Helps release RbfA from mature subunits. May play a role in the assembly of ribosomal proteins into the subunit. Circularly permuted GTPase that catalyzes slow GTP hydrolysis, GTPase activity is stimulated by the 30S ribosomal subunit. This chain is Small ribosomal subunit biogenesis GTPase RsgA, found in Clostridium perfringens (strain SM101 / Type A).